The chain runs to 216 residues: Adenylate kinase (216 aa).

Residue 10–15 participates in ATP binding; the sequence is GSGKGT. The tract at residues 30 to 59 is NMP; that stretch reads STGEILRKEIKKNKKTKKYIKKTINKGKLI. AMP is bound by residues T31, R36, 57 to 59, 85 to 88, and Q92; these read KLI and GFPR. Residues 121-158 are LID; the sequence is GRLIHASSGRTYHKIFNPPKIKNKDDITQEKLCSRNDD. ATP-binding positions include R122 and 131-132; that span reads TY. AMP-binding residues include R155 and R166. Q196 serves as a coordination point for ATP.

It belongs to the adenylate kinase family. Monomer.

It is found in the cytoplasm. The enzyme catalyses AMP + ATP = 2 ADP. It functions in the pathway purine metabolism; AMP biosynthesis via salvage pathway; AMP from ADP: step 1/1. Its function is as follows. Catalyzes the reversible transfer of the terminal phosphate group between ATP and AMP. Plays an important role in cellular energy homeostasis and in adenine nucleotide metabolism. This is Adenylate kinase from Buchnera aphidicola subsp. Cinara cedri (strain Cc).